A 598-amino-acid chain; its full sequence is Beta-fructofuranosidase, insoluble isoenzyme 2 (598 aa).

An N-terminal signal peptide occupies residues methionine 1–alanine 25. Aspartate 69 is a catalytic residue. N-linked (GlcNAc...) asparagine glycans are attached at residues asparagine 164, asparagine 189, and asparagine 348.

The protein belongs to the glycosyl hydrolase 32 family. As to expression, expressed in leaves and flowers. Weakly expressed in seeds. Expressed in growing roots, node and the rapidly elongating zone of the internode.

It localises to the secreted. The protein resides in the cell wall. The catalysed reaction is Hydrolysis of terminal non-reducing beta-D-fructofuranoside residues in beta-D-fructofuranosides.. Functionally, cell wall-associated invertase that cleaves sucrose into glucose and fructose and is required for assimilated carbon partitioning during early grain-filling. May be involved in sucrose unloaded in the ovular and stylar vascular tissues for the stimulation of starch synthesis in the developing endosperm during grain-filling. Sugar homeostasis mediated by CIN2/GIF1 plays an important role in constitutive and induced physical and chemical defense against pathogens. The polypeptide is Beta-fructofuranosidase, insoluble isoenzyme 2 (CIN2) (Oryza sativa subsp. japonica (Rice)).